We begin with the raw amino-acid sequence, 613 residues long: GPI mannosyltransferase 3 (613 aa).

N19 is a glycosylation site (N-linked (GlcNAc...) asparagine). 12 consecutive transmembrane segments (helical) span residues F22 to F42, L83 to I103, A106 to W126, A132 to F152, L168 to A188, L216 to I236, V252 to A272, F280 to F300, Y309 to L329, F342 to I362, F369 to F389, and Y411 to Q431.

It belongs to the glycosyltransferase 22 family. PIGB subfamily.

It is found in the endoplasmic reticulum membrane. It participates in glycolipid biosynthesis; glycosylphosphatidylinositol-anchor biosynthesis. Functionally, mannosyltransferase involved in glycosylphosphatidylinositol-anchor biosynthesis. Transfers the third mannose to Man2-GlcN-acyl-PI during GPI precursor assembly. This is GPI mannosyltransferase 3 (GPI10) from Gibberella zeae (strain ATCC MYA-4620 / CBS 123657 / FGSC 9075 / NRRL 31084 / PH-1) (Wheat head blight fungus).